Reading from the N-terminus, the 251-residue chain is Probable transcriptional regulatory protein CC_3243 (251 aa).

The protein belongs to the TACO1 family.

It localises to the cytoplasm. In Caulobacter vibrioides (strain ATCC 19089 / CIP 103742 / CB 15) (Caulobacter crescentus), this protein is Probable transcriptional regulatory protein CC_3243.